A 304-amino-acid chain; its full sequence is Oxidoreductase calM (304 aa).

4 residues coordinate NADP(+): Ile26, Thr45, Asp68, and Asn98. The active-site Proton donor is Ser152. Tyr166, Lys170, Val200, and Thr202 together coordinate NADP(+). Catalysis depends on Tyr166, which acts as the Proton acceptor. The active-site Lowers pKa of active site Tyr is Lys170.

It belongs to the short-chain dehydrogenases/reductases (SDR) family.

The protein operates within secondary metabolite biosynthesis. Functionally, oxidoreductase; part of the gene cluster that mediates the biosynthesis of calbistrin A and related compounds. Calbistrin A is a secondary metabolite with an interesting structure that was recently found to have bioactivity against leukemia cells. It consists of two polyketides linked by an ester bond: a bicyclic decalin containing polyketide and a linear 12 carbon dioic acid structure. The polyketide synthase calA is probably responsible for forming the decalin moiety. Because calA lacks a designated enoylreductase (ER) domain, the required activity is provided by the trans-enoyl reductase calK. Following release from the PKS, calF then probably catalyzes the oxidation and the subsequent Diels Alder cycloisomerization that lead to the formation of the decalin moiety. The decalin polyketide backbone includes two C-methyl groups, at C7 and C11 in backbone, of which the C7 position is probably methylated by the methyltransferase domain of calA. A candidate for adding the methyl group at C11, if not done by CalA, is the cluster methyltransferase calH. Several additional tailoring enzymes within the cluster could be involved in the modification of the decalin polyketide product. Those include the 3 cytochrome P450 monooxygenases CalE, CalG and CalL, of which one might be responsible for the introduction of the extra hydroxyl group attached to the backbone of the decalin moiety, at position C9 in the backbone, that allows for attachment of the linear moiety. One tailoring enzyme activity that is expected to be involved in biosynthesis of calbistrin is an acyltransferase for connecting the two polyketide synthase products, and which could be performed by the cluster acyltransferase calJ. The enzyme responsible for the biosynthesis of the linear moiety, probably a second PKS, has not been identified yet. This is Oxidoreductase calM from Penicillium decumbens.